A 105-amino-acid polypeptide reads, in one-letter code: Thioredoxin (105 aa).

In terms of domain architecture, Thioredoxin spans 1–105; that stretch reads MANNVMDSSF…SLLDWINKSI (105 aa). A disulfide bridge links Cys30 with Cys33.

This sequence belongs to the thioredoxin family.

Functionally, component of the thioredoxin-thioredoxin reductase system. Participates in various redox reactions through the reversible oxidation of its active center dithiol to a disulfide and catalyzes dithiol-disulfide exchange reactions. In Rickettsia conorii (strain ATCC VR-613 / Malish 7), this protein is Thioredoxin (trxA).